The sequence spans 141 residues: MLTADDKKLIQQIWEKVGSHLEDFGAEALERMFITYPQTKTYFPHFDLHPGSEQIRGHGKKVANALGNAVKSLDNLSQALSELSNLHAYNLRVDPVNFKLLSQCFQVVLAVHMGKDYTPEVHAAYDKFLTAVAAVLAEKYR.

In terms of domain architecture, Globin spans M1 to R141. Residues H58 and H87 each coordinate heme b.

This sequence belongs to the globin family. In terms of assembly, heterotetramer of two alpha-D chains and two beta chains. As to expression, red blood cells.

Functionally, involved in oxygen transport from the lung to the various peripheral tissues. In Struthio camelus (Common ostrich), this protein is Hemoglobin subunit alpha-D (HBAD).